Reading from the N-terminus, the 335-residue chain is NADH-quinone oxidoreductase subunit H (335 aa).

8 consecutive transmembrane segments (helical) span residues 11-31 (VILT…CGAL), 81-101 (MIFT…FVVI), 114-134 (IGLL…LFAG), 154-174 (VSYE…VGSF), 187-207 (LWFI…GVAV), 238-258 (FFVG…TLFF), 270-290 (QVPF…FILL), and 307-327 (WKFC…VVLY).

The protein belongs to the complex I subunit 1 family. NDH-1 is composed of 13 different subunits. Subunits NuoA, H, J, K, L, M, N constitute the membrane sector of the complex.

It is found in the cell inner membrane. The catalysed reaction is a quinone + NADH + 5 H(+)(in) = a quinol + NAD(+) + 4 H(+)(out). Functionally, NDH-1 shuttles electrons from NADH, via FMN and iron-sulfur (Fe-S) centers, to quinones in the respiratory chain. The immediate electron acceptor for the enzyme in this species is believed to be ubiquinone. Couples the redox reaction to proton translocation (for every two electrons transferred, four hydrogen ions are translocated across the cytoplasmic membrane), and thus conserves the redox energy in a proton gradient. This subunit may bind ubiquinone. The protein is NADH-quinone oxidoreductase subunit H of Pseudomonas entomophila (strain L48).